The following is a 313-amino-acid chain: Probable RuBisCO transcriptional regulator (313 aa).

The region spanning 6 to 63 (FTLDQLLILKAIAAQGSFKKAADSLYISQPAVSMQVQNIEKQLNVQLLDRGGRRANLT) is the HTH lysR-type domain. The H-T-H motif DNA-binding region spans 23–42 (FKKAADSLYISQPAVSMQVQ).

It belongs to the LysR transcriptional regulatory family.

The protein localises to the plastid. It localises to the chloroplast. Trans-acting transcriptional regulator of RuBisCO genes (rbcL and rbcS) expression. This chain is Probable RuBisCO transcriptional regulator (rbcR), found in Chlorokybus atmophyticus (Soil alga).